A 254-amino-acid polypeptide reads, in one-letter code: Type III pantothenate kinase (254 aa).

6 to 13 (DLGNSAIK) is a binding site for ATP. Residues Y99 and 106 to 109 (GVDR) each bind substrate. D108 functions as the Proton acceptor in the catalytic mechanism. D128 provides a ligand contact to K(+). T131 is a binding site for ATP. Residue T182 coordinates substrate.

The protein belongs to the type III pantothenate kinase family. As to quaternary structure, homodimer. The cofactor is NH4(+). Requires K(+) as cofactor.

The protein localises to the cytoplasm. The catalysed reaction is (R)-pantothenate + ATP = (R)-4'-phosphopantothenate + ADP + H(+). It functions in the pathway cofactor biosynthesis; coenzyme A biosynthesis; CoA from (R)-pantothenate: step 1/5. Catalyzes the phosphorylation of pantothenate (Pan), the first step in CoA biosynthesis. In Halorhodospira halophila (strain DSM 244 / SL1) (Ectothiorhodospira halophila (strain DSM 244 / SL1)), this protein is Type III pantothenate kinase.